A 703-amino-acid chain; its full sequence is MLHFLETDIAGRKLKVECGKTGMLSNCAMFISYGDTVVMVNVNASEKPREGIDFFPLSIEYEERQYSVGKIPGGFVKREGRPSEKSILHARAIDRPLRPLFPKGYRNDVQVVCTVMSVEQDNLPEILAMNGASMALCLSDIPFTTPVATVSVGCIDGKFVLNPTLEEREKSSLDLTVCATNERVMMLEAGADEIPEDLMIAAIDFGFNACQDIVAFQEKAMKEFGKEKVTPELYHPKEEIEKDVTEFAFESIKEIMYITDRDERNLRLREIKEKISNEFAEKYPDDGADIDEVVYTLQKKVVRNMLLKEHRRPDGRRFDEIRPISCDVDLLPRTHGSGLFTRGLTQVMTVTTLGPIGDAQVIDGLGVEESKRYMHHYNFPPYSTGEVKPLRGPNRREIGHGALAEKALVPLIPSEEEFPYTIRLVSEVLSSNGSTSQASVCGSTLALMDAGVPIKRPAAGIAMGLITSEDLSKEAVITDIQGLEDFFGDMDFKVAGTEKGITAIQVDTKIHGLSKYCIKTAINDARKARLFILEKMVACINEPRKELSTYAPRAYTINIDTDKIRTLIGTGGKTINKIIEETGVKIDIREDGTVFVLSSDADSANRALKMIDDLTKDVKVGEVYLGKVTKITNFGAFVEVLPGKEGLVHISKLDINKVNKVEDVVSVGDEILVKVTDIDNQGRVNLSRKDVLKQQESNNSKEK.

Residues D485 and D491 each coordinate Mg(2+). The region spanning 552 to 611 (PRAYTINIDTDKIRTLIGTGGKTINKIIEETGVKIDIREDGTVFVLSSDADSANRALKMI) is the KH domain. Residues 621–689 (GEVYLGKVTK…NQGRVNLSRK (69 aa)) enclose the S1 motif domain.

It belongs to the polyribonucleotide nucleotidyltransferase family. It depends on Mg(2+) as a cofactor.

It localises to the cytoplasm. The catalysed reaction is RNA(n+1) + phosphate = RNA(n) + a ribonucleoside 5'-diphosphate. Its function is as follows. Involved in mRNA degradation. Catalyzes the phosphorolysis of single-stranded polyribonucleotides processively in the 3'- to 5'-direction. The protein is Polyribonucleotide nucleotidyltransferase of Clostridium acetobutylicum (strain ATCC 824 / DSM 792 / JCM 1419 / IAM 19013 / LMG 5710 / NBRC 13948 / NRRL B-527 / VKM B-1787 / 2291 / W).